The chain runs to 93 residues: Alpha-defensin 2 (93 aa).

An N-terminal signal peptide occupies residues 1–19; it reads MKPLVLLSALVLLSFQVQA. Positions 20 to 58 are excised as a propeptide; it reads DPIQNTDEETKTEEQSGEEDQAVSVSFGDREGASLQEES. The interval 23–49 is disordered; sequence QNTDEETKTEEQSGEEDQAVSVSFGDR. 3 disulfides stabilise this stretch: Cys64–Cys92, Cys66–Cys81, and Cys71–Cys91.

This sequence belongs to the alpha-defensin family. As to expression, paneth cells of the small bowel.

It is found in the secreted. Has broad-spectrum antimicrobial properties. Has antibacterial activity against the Gram-positive bacterium L.monocytogenes EGD and the Gram-negative bacteria E.coli ML-35p and avirulent S.typhimurium 7953, but not against the mouse-virulent S.typhimurium 14028S. Probably contributes to the antimicrobial barrier function of the small bowel mucosa. This chain is Alpha-defensin 2 (Defa2), found in Mus musculus (Mouse).